Reading from the N-terminus, the 340-residue chain is Aurora kinase A- and ninein-interacting protein (340 aa).

Residues Q175–H340 are interaction with AURKA. Over residues A178–T190 the composition is skewed to basic and acidic residues. The segment at A178–P209 is disordered. The segment at R266–H340 is interaction with RBBP8/CtIP. Position 277 is a phosphoserine (S277). A disordered region spans residues D293 to P317. Polar residues predominate over residues N296 to G313.

Belongs to the AUNIP family. In terms of assembly, interacts (via C-terminus) with AURKA (via C-terminus). Interacts (via N-terminus) with NIN; this interaction blocks NIN phosphorylation by both AURKA and GSK3B. Identified in a complex with NIN and AURKA. Interacts with RBBP8/CtIP.

The protein resides in the nucleus. It localises to the chromosome. Its subcellular location is the cytoplasm. The protein localises to the cytoskeleton. It is found in the microtubule organizing center. The protein resides in the centrosome. It localises to the spindle pole. Its function is as follows. DNA-binding protein that accumulates at DNA double-strand breaks (DSBs) following DNA damage and promotes DNA resection and homologous recombination. Serves as a sensor of DNA damage: binds DNA with a strong preference for DNA substrates that mimic structures generated at stalled replication forks, and anchors RBBP8/CtIP to DSB sites to promote DNA end resection and ensuing homologous recombination repair. Inhibits non-homologous end joining (NHEJ). Required for the dynamic movement of AURKA at the centrosomes and spindle apparatus during the cell cycle. The chain is Aurora kinase A- and ninein-interacting protein from Mus musculus (Mouse).